Reading from the N-terminus, the 162-residue chain is Cyanate hydratase (162 aa).

Active-site residues include Arg103, Glu106, and Ser129.

It belongs to the cyanase family.

It catalyses the reaction cyanate + hydrogencarbonate + 3 H(+) = NH4(+) + 2 CO2. Its function is as follows. Catalyzes the reaction of cyanate with bicarbonate to produce ammonia and carbon dioxide. This is Cyanate hydratase from Phaeosphaeria nodorum (strain SN15 / ATCC MYA-4574 / FGSC 10173) (Glume blotch fungus).